The following is a 361-amino-acid chain: Cysteine-rich with EGF-like domain protein 2-B (361 aa).

The first 24 residues, 1-24 (MNGSRAWRLAAWLLLCLSCSAAVA), serve as a signal peptide directing secretion. The EGF-like 1 domain maps to 134–176 (DCLACLGGSERPCHGNGFCSGDGTRSGDGSCRCKAEYTGSFCL). 3 disulfides stabilise this stretch: cysteine 138–cysteine 152, cysteine 146–cysteine 164, and cysteine 166–cysteine 175. N-linked (GlcNAc...) asparagine glycosylation occurs at asparagine 188. FU repeat units follow at residues 191–238 (HAVC…EESP) and 251–298 (SFLC…SEKL). The EGF-like 2; calcium-binding domain maps to 288–329 (DVDECDASEKLCLRENEVCLNTAGSYKCTCSEGFEDKEGNCV). Disulfide bonds link cysteine 292–cysteine 306, cysteine 299–cysteine 315, and cysteine 317–cysteine 328. The tract at residues 339–361 (ITEGETGTPASDTNILNTAHEDL) is disordered. Residues 346–355 (TPASDTNILN) show a composition bias toward polar residues.

This sequence belongs to the CRELD family.

The protein resides in the secreted. The protein localises to the endoplasmic reticulum. Functionally, possible role in neuronal acetylcholine receptor transport. This is Cysteine-rich with EGF-like domain protein 2-B (creld2-b) from Xenopus laevis (African clawed frog).